A 222-amino-acid chain; its full sequence is Charged multivesicular body protein 3 (222 aa).

Gly-2 is lipidated: N-myristoyl glycine. The segment at 2 to 113 (GLFGKTQEKP…LQKSTEVMKA (112 aa)) is intramolecular interaction with C-terminus. The stretch at 22–54 (KIRKEMRVVDRQIRDIQREEEKVKRSVKDAAKK) forms a coiled coil. 2 important for autoinhibitory function regions span residues 59-64 (VCIVLA) and 168-169 (IL). Positions 141–222 (EEMLEDTFES…MQSRLATLRS (82 aa)) form a coiled coil. Positions 151-220 (MDDQEEMEEE…EAMQSRLATL (70 aa)) are intramolecular interaction with N-terminus. The interval 151-222 (MDDQEEMEEE…MQSRLATLRS (72 aa)) is interaction with VPS4A. A Glycyl lysine isopeptide (Lys-Gly) (interchain with G-Cter in ubiquitin) cross-link involves residue Lys-179. The interval 180-222 (APSKVTDALPEPEPPGAMAASEDEEEEEEALEAMQSRLATLRS) is disordered. Ser-200 is modified (phosphoserine). The segment covering 200–210 (SEDEEEEEEAL) has biased composition (acidic residues). An MIT-interacting motif motif is present at residues 201–211 (EDEEEEEEALE). Interaction with STAMBP regions lie at residues 203-207 (EEEEE) and 221-222 (RS).

It belongs to the SNF7 family. In terms of assembly, probable core component of the endosomal sorting required for transport complex III (ESCRT-III). ESCRT-III components are thought to multimerize to form a flat lattice on the perimeter membrane of the endosome. Several assembly forms of ESCRT-III may exist that interact and act sequentially. Forms a metastable monomer in solution; its core structure (without part of the putative autoinhibitory C-terminal acidic region) oligomerizes into a flat lattice via two different dimerization interfaces. In vitro, heteromerizes with CHMP2A (but not CHMP4) to form helical tubular structures that expose membrane-interacting sites on the outside whereas VPS4B can associate on the inside of the tubule. May interact with IGFBP7; the relevance of such interaction however remains unclear. Interacts with CHMP2A. Interacts with CHMP4A; the interaction requires the release of CHMP4A autoinhibition. Interacts with VPS4A. Interacts with STAMBP; the interaction appears to relieve the autoinhibition of CHMP3. Interacts with VTA1. In terms of tissue distribution, widely expressed. Expressed in heart, brain, placenta, lung, liver, skeletal muscle, kidney and pancreas.

Its subcellular location is the cytoplasm. The protein localises to the cytosol. It localises to the membrane. The protein resides in the endosome. It is found in the late endosome membrane. Probable core component of the endosomal sorting required for transport complex III (ESCRT-III) which is involved in multivesicular bodies (MVBs) formation and sorting of endosomal cargo proteins into MVBs. MVBs contain intraluminal vesicles (ILVs) that are generated by invagination and scission from the limiting membrane of the endosome and mostly are delivered to lysosomes enabling degradation of membrane proteins, such as stimulated growth factor receptors, lysosomal enzymes and lipids. The MVB pathway appears to require the sequential function of ESCRT-O, -I,-II and -III complexes. ESCRT-III proteins mostly dissociate from the invaginating membrane before the ILV is released. The ESCRT machinery also functions in topologically equivalent membrane fission events, such as the terminal stages of cytokinesis and the budding of enveloped viruses (HIV-1 and other lentiviruses). ESCRT-III proteins are believed to mediate the necessary vesicle extrusion and/or membrane fission activities, possibly in conjunction with the AAA ATPase VPS4. Selectively binds to phosphatidylinositol 3,5-bisphosphate PtdIns(3,5)P2 and PtdIns(3,4)P2 in preference to other phosphoinositides tested. Involved in late stages of cytokinesis. Plays a role in endosomal sorting/trafficking of EGF receptor. Isoform 2 prevents stress-mediated cell death and accumulation of reactive oxygen species when expressed in yeast cells. The sequence is that of Charged multivesicular body protein 3 (CHMP3) from Homo sapiens (Human).